The chain runs to 456 residues: PTS system sucrose-specific EIIBC component (456 aa).

A PTS EIIB type-1 domain is found at 4-87 (EQISRSLLPL…IQAAGISESS (84 aa)). C26 acts as the Phosphocysteine intermediate; for EIIB activity in catalysis. Residues 107-456 (RLLSNIFVPI…LTLKYKTDAE (350 aa)) enclose the PTS EIIC type-1 domain. 10 helical membrane-spanning segments follow: residues 112 to 132 (IFVP…LLGM), 144 to 164 (ALYI…PILI), 181 to 201 (TLGG…AAGF), 209 to 229 (IEVA…AVWF), 247 to 267 (LILT…LLIG), 288 to 308 (AGWL…ITGI), 329 to 349 (FLLP…FAVW), 360 to 380 (ITLP…IFGI), 388 to 408 (FIAA…MHVY), and 428 to 448 (LLNY…LSLT).

Its subcellular location is the cell inner membrane. The catalysed reaction is N(pros)-phospho-L-histidyl-[protein](out) + sucrose = sucrose 6(G)-phosphate(in) + L-histidyl-[protein]. Its function is as follows. The phosphoenolpyruvate-dependent sugar phosphotransferase system (sugar PTS), a major carbohydrate active transport system, catalyzes the phosphorylation of incoming sugar substrates concomitantly with their translocation across the cell membrane. This system is involved in sucrose transport. The polypeptide is PTS system sucrose-specific EIIBC component (Klebsiella pneumoniae).